The following is a 187-amino-acid chain: Large ribosomal subunit protein uL5 (187 aa).

It belongs to the universal ribosomal protein uL5 family. As to quaternary structure, part of the 50S ribosomal subunit; part of the 5S rRNA/L5/L18/L25 subcomplex. Contacts the 5S rRNA and the P site tRNA. Forms a bridge to the 30S subunit in the 70S ribosome.

Functionally, this is one of the proteins that bind and probably mediate the attachment of the 5S RNA into the large ribosomal subunit, where it forms part of the central protuberance. In the 70S ribosome it contacts protein S13 of the 30S subunit (bridge B1b), connecting the 2 subunits; this bridge is implicated in subunit movement. Contacts the P site tRNA; the 5S rRNA and some of its associated proteins might help stabilize positioning of ribosome-bound tRNAs. This is Large ribosomal subunit protein uL5 from Saccharopolyspora erythraea (strain ATCC 11635 / DSM 40517 / JCM 4748 / NBRC 13426 / NCIMB 8594 / NRRL 2338).